Here is a 91-residue protein sequence, read N- to C-terminus: Ragulator complex protein LAMTOR5 homolog (91 aa).

This sequence belongs to the LAMTOR5 family. Part of the Ragulator complex.

The protein resides in the cytoplasm. The protein localises to the lysosome. Regulator of the TOR pathway, a signaling cascade that promotes cell growth in response to growth factors, energy levels, and amino acids. As part of the Ragulator complex, may activate the TOR signaling cascade in response to amino acids. The chain is Ragulator complex protein LAMTOR5 homolog from Ixodes scapularis (Black-legged tick).